The primary structure comprises 223 residues: Probable tRNA-splicing endonuclease subunit tsp-1 (223 aa).

The tract at residues 1-55 (MESGSTPPTDKQIRENEQDGTGHQGKLLARPTSTRQQQQQQQQQPSHSVSQSVSQ) is disordered. Low complexity predominate over residues 30–55 (RPTSTRQQQQQQQQQPSHSVSQSVSQ).

The protein belongs to the SEN15 family. As to quaternary structure, tRNA splicing endonuclease is a heterotetramer composed of tsp-2/sen2, tsp-1/sen15, tsp-4/sen34 and tsp-5/sen54. Interacts directly with tsp-4/sen34.

Functionally, non-catalytic subunit of the tRNA-splicing endonuclease complex, a complex responsible for identification and cleavage of the splice sites in pre-tRNA. It cleaves pre-tRNA at the 5' and 3' splice sites to release the intron. The products are an intron and two tRNA half-molecules bearing 2',3' cyclic phosphate and 5'-OH termini. There are no conserved sequences at the splice sites, but the intron is invariably located at the same site in the gene, placing the splice sites an invariant distance from the constant structural features of the tRNA body. The chain is Probable tRNA-splicing endonuclease subunit tsp-1 (tsp-1) from Neurospora crassa (strain ATCC 24698 / 74-OR23-1A / CBS 708.71 / DSM 1257 / FGSC 987).